The following is a 303-amino-acid chain: Probable cell division protein WhiA (303 aa).

The segment at residues 272 to 303 is a DNA-binding region (H-T-H motif); sequence SIQQIADSLAVPLTKSGVNHRLRKINKIAEDL.

The protein belongs to the WhiA family.

Involved in cell division and chromosome segregation. This Streptococcus mutans serotype c (strain ATCC 700610 / UA159) protein is Probable cell division protein WhiA.